A 442-amino-acid polypeptide reads, in one-letter code: 3-phosphoshikimate 1-carboxyvinyltransferase (442 aa).

3-phosphoshikimate is bound by residues Lys-25, Ser-26, and Arg-30. Lys-25 contributes to the phosphoenolpyruvate binding site. Phosphoenolpyruvate-binding residues include Gly-96 and Arg-124. 6 residues coordinate 3-phosphoshikimate: Ser-171, Ser-172, Gln-173, Ser-203, Asp-325, and Lys-352. Gln-173 is a phosphoenolpyruvate binding site. Residue Asp-325 is the Proton acceptor of the active site. Phosphoenolpyruvate-binding residues include Arg-356, Arg-400, and Lys-425.

This sequence belongs to the EPSP synthase family. In terms of assembly, monomer.

The protein resides in the cytoplasm. It catalyses the reaction 3-phosphoshikimate + phosphoenolpyruvate = 5-O-(1-carboxyvinyl)-3-phosphoshikimate + phosphate. Its pathway is metabolic intermediate biosynthesis; chorismate biosynthesis; chorismate from D-erythrose 4-phosphate and phosphoenolpyruvate: step 6/7. Its function is as follows. Catalyzes the transfer of the enolpyruvyl moiety of phosphoenolpyruvate (PEP) to the 5-hydroxyl of shikimate-3-phosphate (S3P) to produce enolpyruvyl shikimate-3-phosphate and inorganic phosphate. The chain is 3-phosphoshikimate 1-carboxyvinyltransferase from Bordetella pertussis (strain Tohama I / ATCC BAA-589 / NCTC 13251).